The sequence spans 336 residues: Serpentine receptor class gamma-9 (336 aa).

7 helical membrane-spanning segments follow: residues 30–50 (LLQA…LYVI), 64–84 (FVIY…DIFI), 111–131 (IYYP…IFLT), 152–172 (LSFI…NTII), 200–220 (FLFL…VIMF), 237–257 (LCLA…FEAL), and 271–291 (FLIQ…IMIF).

This sequence belongs to the nematode receptor-like protein srg family.

Its subcellular location is the membrane. The sequence is that of Serpentine receptor class gamma-9 (srg-9) from Caenorhabditis elegans.